The sequence spans 501 residues: Chromosomal replication initiator protein DnaA (501 aa).

The interval Met1–Pro90 is domain I, interacts with DnaA modulators. Positions Asn91–Ser164 are domain II. Residues Ala103 to Lys121 are compositionally biased toward low complexity. The tract at residues Ala103–Glu150 is disordered. Residues Asn122 to Phe134 are compositionally biased toward basic and acidic residues. Residues Tyr165–Ser381 are domain III, AAA+ region. Gly209, Gly211, Lys212, and Thr213 together coordinate ATP. A domain IV, binds dsDNA region spans residues His382–Thr501.

It belongs to the DnaA family. Oligomerizes as a right-handed, spiral filament on DNA at oriC.

It is found in the cytoplasm. Functionally, plays an essential role in the initiation and regulation of chromosomal replication. ATP-DnaA binds to the origin of replication (oriC) to initiate formation of the DNA replication initiation complex once per cell cycle. Binds the DnaA box (a 9 base pair repeat at the origin) and separates the double-stranded (ds)DNA. Forms a right-handed helical filament on oriC DNA; dsDNA binds to the exterior of the filament while single-stranded (ss)DNA is stabiized in the filament's interior. The ATP-DnaA-oriC complex binds and stabilizes one strand of the AT-rich DNA unwinding element (DUE), permitting loading of DNA polymerase. After initiation quickly degrades to an ADP-DnaA complex that is not apt for DNA replication. Binds acidic phospholipids. The chain is Chromosomal replication initiator protein DnaA from Pseudomonas fluorescens (strain SBW25).